A 135-amino-acid chain; its full sequence is Probable disulfide formation protein (135 aa).

A helical membrane pass occupies residues 7–26 (SYCLYFAWLVSCIGTLMSVY). Cys-36 and Cys-39 are joined by a disulfide. Transmembrane regions (helical) follow at residues 41-60 (YQRI…AYLD) and 67-84 (YALP…YQVC). Cys-96 and Cys-101 form a disulfide bridge. A helical transmembrane segment spans residues 109–131 (GFITMPMASALAFFAIANLLIFA).

Belongs to the DsbB family. BdbC subfamily.

It is found in the cell inner membrane. Its function is as follows. Required for disulfide bond formation in some proteins. This chain is Probable disulfide formation protein, found in Chlamydia muridarum (strain MoPn / Nigg).